The chain runs to 345 residues: NADH-quinone oxidoreductase subunit 8 (345 aa).

8 consecutive transmembrane segments (helical) span residues 15-35 (MLLQGLAVIAFVMGSLIFMVY), 82-102 (FVYFLAPFLSMMLALFAFVVI), 115-135 (VGILFIFAASSLEVYGVIMGG), 161-181 (LGLIIIGIIISTGSMNLTAIV), 190-210 (LLNWYWLPHLPMVVLFFVSAL), 240-262 (YLLFMAGEYIAMYLMCALLSLLF), 278-298 (WWMVIKMWFWFYMFAMVKAIV), and 309-329 (IGWKVFLPLSLGWVVLVAILA).

The protein belongs to the complex I subunit 1 family. As to quaternary structure, NDH-1 is composed of at least 14 different subunits, Nqo1 to Nqo14. The complex has a L-shaped structure, with the hydrophobic arm (subunits Nqo7, Nqo8, Nqo10 to Nqo14) embedded in the inner membrane and the hydrophilic peripheral arm (subunits Nqo1 to Nqo6, Nqo9) protruding into the bacterial cytoplasm. The hydrophilic domain contains all the redox centers.

It localises to the cell inner membrane. It catalyses the reaction a quinone + NADH + 5 H(+)(in) = a quinol + NAD(+) + 4 H(+)(out). Its function is as follows. NDH-1 shuttles electrons from NADH, via FMN and iron-sulfur (Fe-S) centers, to quinones in the respiratory chain. The immediate electron acceptor for the enzyme in this species is believed to be ubiquinone. Couples the redox reaction to proton translocation (for every two electrons transferred, four hydrogen ions are translocated across the cytoplasmic membrane), and thus conserves the redox energy in a proton gradient. This chain is NADH-quinone oxidoreductase subunit 8, found in Paracoccus denitrificans.